The following is a 101-amino-acid chain: Small ribosomal subunit protein uS14 (101 aa).

It belongs to the universal ribosomal protein uS14 family. Part of the 30S ribosomal subunit. Contacts proteins S3 and S10.

Its function is as follows. Binds 16S rRNA, required for the assembly of 30S particles and may also be responsible for determining the conformation of the 16S rRNA at the A site. The chain is Small ribosomal subunit protein uS14 from Shewanella sediminis (strain HAW-EB3).